The chain runs to 162 residues: Anthrone oxygenase nsrD (162 aa).

The next 3 membrane-spanning stretches (helical) occupy residues 17–37 (FLSG…LDTI), 54–74 (GSIY…YVAL), and 86–106 (PYVL…WVMV). A glycan (N-linked (GlcNAc...) asparagine) is linked at Asn-109. A helical membrane pass occupies residues 130–150 (LVVKWAWLHVVRSLYPLFGAF).

The protein belongs to the anthrone oxygenase family.

It localises to the membrane. The catalysed reaction is emodin anthrone + O2 = emodin + H2O + H(+). It participates in secondary metabolite biosynthesis. Functionally, anthrone oxygenase; part of the gene cluster that mediates the biosynthesis of the tetrahydroxanthone dimer neosartorin, which exhibits antibacterial activity. The two different monomeric units appear to be synthesized by the same set of enzymes, among which the Baeyer-Villiger monooxygenase nsrF is the key enzyme for the divergence of the biosynthetic routes. The pathway begins with the synthesis of atrochrysone thioester by the polyketide synthase nsrB. The atrochrysone carboxyl ACP thioesterase nsrC then breaks the thioester bond and releases the atrochrysone carboxylic acid from AacuL. Atrochrysone carboxylic acid is decarboxylated by the decarboxylase nsrE, and oxidized by the anthrone oxygenase nsrD to yield emodin. Emodin is then reduced to emodin hydroquinone by the oxidoreductase nsrR. A-ring reduction by the short chain dehydrogenase nsrJ, dehydration by the scytalone dehydratase-like protein nsrI and probable spontaneous re-oxidation, results in overall deoxygenation to chrysophanol. The Baeyer-Villiger monooxygenase nsrF accepts chrysophanol as a substrate to insert one oxygen atom at two different positions to yield the precursors of both monomric units. NsrF is promiscuous/flexible in interacting with the 2 (non methylated and methylated) aromatic rings of chrysophanol, thus diverging the biosynthetic pathway at this point. After the hydrolysis of the lactones, methylesterification by the methyltransferase nsrG yields respectively moniliphenone and 2,2',6'-trihydroxy-4-methyl-6-methoxya-cyldiphenylmethanone. The next steps are the hydroxylation by the FAD-dependent monooxygenase nsrK, followed by isomerization by the monooxygenase nsrQ. The short chain dehydrogenase/reductase nsrO then catalyzes the C-5 ketoreduction to give the xanthone skeleton of blennolide C and 5-acetylblennolide A. The acetyltransferase nsrL has a strict substrate specificity and uses only blennolide A but not blennolide C to yield 5-acetylblennolide A as the single-acetylated product. In the final step of the biosynthesis, the heterodimerization of the 2 xanthones, blennolide C and 5-acetylblennolide A, is catalyzed by the cytochrome P450 monooxygenase nsrP. NsrP can utilize at least three different xanthones as its substrates to perform the dimerization reaction. The sequence is that of Anthrone oxygenase nsrD from Aspergillus novofumigatus (strain IBT 16806).